Reading from the N-terminus, the 134-residue chain is CDGSH iron-sulfur domain-containing protein 2 homolog (134 aa).

Residues 1-35 lie on the Lumenal side of the membrane; sequence MESLSQLVKSTLPNYLSNLPIPDSVGGWFKLSFKD. Residues 36–58 traverse the membrane as a helical segment; sequence WLALIPPTVVVAGIGYTGYLAFC. Over 59–134 the chain is Cytoplasmic; the sequence is PAAQARCSAT…NVGPVVVKKQ (76 aa). Residues Cys100, Cys102, Cys111, and His115 each contribute to the [2Fe-2S] cluster site.

It belongs to the CISD protein family. CISD2 subfamily. Requires [2Fe-2S] cluster as cofactor.

The protein resides in the endoplasmic reticulum membrane. The protein is CDGSH iron-sulfur domain-containing protein 2 homolog of Drosophila ananassae (Fruit fly).